The chain runs to 126 residues: Aspartate 1-decarboxylase (126 aa).

Ser25 serves as the catalytic Schiff-base intermediate with substrate; via pyruvic acid. Ser25 is subject to Pyruvic acid (Ser). Thr57 lines the substrate pocket. Residue Tyr58 is the Proton donor of the active site. Residue 73 to 75 coordinates substrate; that stretch reads GAA.

Belongs to the PanD family. In terms of assembly, heterooctamer of four alpha and four beta subunits. Pyruvate is required as a cofactor. Is synthesized initially as an inactive proenzyme, which is activated by self-cleavage at a specific serine bond to produce a beta-subunit with a hydroxyl group at its C-terminus and an alpha-subunit with a pyruvoyl group at its N-terminus.

The protein resides in the cytoplasm. It catalyses the reaction L-aspartate + H(+) = beta-alanine + CO2. It participates in cofactor biosynthesis; (R)-pantothenate biosynthesis; beta-alanine from L-aspartate: step 1/1. Catalyzes the pyruvoyl-dependent decarboxylation of aspartate to produce beta-alanine. The polypeptide is Aspartate 1-decarboxylase (Saccharophagus degradans (strain 2-40 / ATCC 43961 / DSM 17024)).